The following is a 453-amino-acid chain: Tetrahydroanabasine acetyltransferase (453 aa).

Catalysis depends on proton acceptor residues His-163 and Asp-388.

This sequence belongs to the plant acyltransferase family. In terms of assembly, monomer.

The enzyme catalyses tetrahydroanabasine + acetyl-CoA = ammodendrine + CoA. It functions in the pathway alkaloid biosynthesis. Its function is as follows. Tetrahydroanabasine acetyltransferase involved in the accumulation of quinolizidine type antinutritional alkaloids (QAs). QAs impart a bitter taste to plants, acting as repellents and toxicants for herbivores and predators, and possess a variety of pharmacological effects, including sedative, anticonvulsant, anti-inflammatory, antiviral, antitumor, antipyretic, anti-hepatitis B, antifibrotic, antiallergic, antidiarrheal, analgesic and antimicrobial activities. Mediates the conversion of tetrahydroanabasine into ammodendrine. This is Tetrahydroanabasine acetyltransferase from Lupinus angustifolius (Narrow-leaved blue lupine).